A 127-amino-acid polypeptide reads, in one-letter code: RutC family protein PYRAB12510 (127 aa).

It belongs to the RutC family.

The chain is RutC family protein PYRAB12510 from Pyrococcus abyssi (strain GE5 / Orsay).